Here is a 415-residue protein sequence, read N- to C-terminus: Gamma-glutamyl phosphate reductase (415 aa).

The protein belongs to the gamma-glutamyl phosphate reductase family.

The protein localises to the cytoplasm. The enzyme catalyses L-glutamate 5-semialdehyde + phosphate + NADP(+) = L-glutamyl 5-phosphate + NADPH + H(+). Its pathway is amino-acid biosynthesis; L-proline biosynthesis; L-glutamate 5-semialdehyde from L-glutamate: step 2/2. Its function is as follows. Catalyzes the NADPH-dependent reduction of L-glutamate 5-phosphate into L-glutamate 5-semialdehyde and phosphate. The product spontaneously undergoes cyclization to form 1-pyrroline-5-carboxylate. This chain is Gamma-glutamyl phosphate reductase, found in Carboxydothermus hydrogenoformans (strain ATCC BAA-161 / DSM 6008 / Z-2901).